The following is a 157-amino-acid chain: MKVSLMAAKAKNGVIGCGPHIPWSAKGEQLLFKALTYNQWLLVGRKTFESMGALPNRKYAVVTRSAWTADNDNVIVFPSIEEAMYGLAELTDHVIVSGGGEIYRETLPMASTLHISTIDIEPEGDVFFPNIPNTFEVVFEQHFSSNINYCYQIWQKG.

The DHFR domain maps to 2 to 156 (KVSLMAAKAK…INYCYQIWQK (155 aa)).

Belongs to the dihydrofolate reductase family. In terms of assembly, homodimer.

It catalyses the reaction (6S)-5,6,7,8-tetrahydrofolate + NADP(+) = 7,8-dihydrofolate + NADPH + H(+). It participates in cofactor biosynthesis; tetrahydrofolate biosynthesis; 5,6,7,8-tetrahydrofolate from 7,8-dihydrofolate: step 1/1. Its function is as follows. Key enzyme in folate metabolism. Catalyzes an essential reaction for de novo glycine and purine synthesis, and for DNA precursor synthesis. The protein is Dihydrofolate reductase type 5 (dhfrV) of Escherichia coli.